Here is a 162-residue protein sequence, read N- to C-terminus: Phosphopantetheine adenylyltransferase (162 aa).

A substrate-binding site is contributed by Ser11. ATP is bound by residues 11-12 and His19; that span reads SF. Lys43, Val76, and Arg90 together coordinate substrate. Residues 91–93, Glu101, and 126–132 each bind ATP; these read GLR and HLYISSS.

This sequence belongs to the bacterial CoaD family. As to quaternary structure, homohexamer. It depends on Mg(2+) as a cofactor.

The protein localises to the cytoplasm. It catalyses the reaction (R)-4'-phosphopantetheine + ATP + H(+) = 3'-dephospho-CoA + diphosphate. It functions in the pathway cofactor biosynthesis; coenzyme A biosynthesis; CoA from (R)-pantothenate: step 4/5. In terms of biological role, reversibly transfers an adenylyl group from ATP to 4'-phosphopantetheine, yielding dephospho-CoA (dPCoA) and pyrophosphate. The chain is Phosphopantetheine adenylyltransferase from Streptococcus pneumoniae (strain Taiwan19F-14).